The primary structure comprises 179 residues: MSTEFNQVNKLKKTPRRNDNLNEAKFVERLIKISRVTKVTKGGKKLSFRAVVVIGDENGKVGVGVGKAEDVVNAFKKAKTDGRKNLIDVPITKSLSIPHAVIGDLGACKIIMRPSIEGSGVIAGGAVRTVLEVAGIKNVIAKQLGSDNLLNNARTAIVALESLTTLDEVKRKRYHKSVL.

Residues 26–89 (FVERLIKISR…TDGRKNLIDV (64 aa)) enclose the S5 DRBM domain.

The protein belongs to the universal ribosomal protein uS5 family. Part of the 30S ribosomal subunit. Contacts protein S4.

Its subcellular location is the plastid. It localises to the chloroplast. With S4 and S12 plays an important role in translational accuracy. The sequence is that of Small ribosomal subunit protein uS5c (rps5) from Thalassiosira pseudonana (Marine diatom).